Consider the following 179-residue polypeptide: Sec-independent protein translocase protein TatB (179 aa).

A helical membrane pass occupies residues 1–21 (MFDLGFWEVLIIMLIGLLILG). 2 stretches are compositionally biased toward basic and acidic residues: residues 75 to 86 (KDVEKNARRFEA) and 94 to 106 (TFRDVGRQADDAA). The disordered stretch occupies residues 75-179 (KDVEKNARRF…QGGGGEEKRQ (105 aa)).

Belongs to the TatB family. As to quaternary structure, the Tat system comprises two distinct complexes: a TatABC complex, containing multiple copies of TatA, TatB and TatC subunits, and a separate TatA complex, containing only TatA subunits. Substrates initially bind to the TatABC complex, which probably triggers association of the separate TatA complex to form the active translocon.

It localises to the cell inner membrane. In terms of biological role, part of the twin-arginine translocation (Tat) system that transports large folded proteins containing a characteristic twin-arginine motif in their signal peptide across membranes. Together with TatC, TatB is part of a receptor directly interacting with Tat signal peptides. TatB may form an oligomeric binding site that transiently accommodates folded Tat precursor proteins before their translocation. The protein is Sec-independent protein translocase protein TatB of Alkalilimnicola ehrlichii (strain ATCC BAA-1101 / DSM 17681 / MLHE-1).